The chain runs to 518 residues: Cytochrome P450 26C1 (518 aa).

Residues 293–313 (LLFAAFFTTASASTSLILLLL) traverse the membrane as a helical segment. C455 serves as a coordination point for heme.

It belongs to the cytochrome P450 family. It depends on heme as a cofactor.

Its subcellular location is the membrane. The enzyme catalyses an organic molecule + reduced [NADPH--hemoprotein reductase] + O2 = an alcohol + oxidized [NADPH--hemoprotein reductase] + H2O + H(+). It catalyses the reaction all-trans-retinoate + reduced [NADPH--hemoprotein reductase] + O2 = all-trans-4-hydroxyretinoate + oxidized [NADPH--hemoprotein reductase] + H2O + H(+). The catalysed reaction is all-trans-4-hydroxyretinoate + reduced [NADPH--hemoprotein reductase] + O2 = all-trans-4-oxoretinoate + oxidized [NADPH--hemoprotein reductase] + 2 H2O + H(+). It carries out the reaction 9-cis-retinoate + reduced [NADPH--hemoprotein reductase] + O2 = 9-cis-4-hydroxyretinoate + oxidized [NADPH--hemoprotein reductase] + H2O + H(+). The enzyme catalyses 9-cis-4-hydroxyretinoate + reduced [NADPH--hemoprotein reductase] + O2 = 9-cis-4-oxoretinoate + oxidized [NADPH--hemoprotein reductase] + 2 H2O + H(+). It catalyses the reaction all-trans-4-hydroxy-13,14-dihydroretinoate + reduced [NADPH--hemoprotein reductase] + O2 = all-trans-4-oxo-13,14-dihydroretinoate + oxidized [NADPH--hemoprotein reductase] + 2 H2O + H(+). The catalysed reaction is all-trans-13,14-dihydroretinoate + reduced [NADPH--hemoprotein reductase] + O2 = all-trans-4-hydroxy-13,14-dihydroretinoate + oxidized [NADPH--hemoprotein reductase] + H2O + H(+). Its function is as follows. A cytochrome P450 monooxygenase involved in the metabolism of retinoates (RAs), the active metabolites of vitamin A, and critical signaling molecules in animals. RAs exist as at least four different isomers: all-trans-RA (atRA), 9-cis-RA, 13-cis-RA, and 9,13-dicis-RA, where atRA is considered to be the biologically active isomer, although 9-cis-RA and 13-cis-RA also have activity. Catalyzes the oxidation of atRA primarily at C-4. Oxidation of atRA limits its biological activity and initiates a degradative process leading to its eventual elimination, thereby contributes to the regulation of atRA homeostasis and signaling. Able to metabolize other RAs such as 9-cis with high efficiency. Can oxidize all-trans-13,14-dihydroretinoate (DRA) to metabolites which could include all-trans-4-oxo-DRA, all-trans-4-hydroxy-DRA, all-trans-5,8-epoxy-DRA, and all-trans-18-hydroxy-DRA. Shares sequence similarity with other CYP26 family members, but has higher affinity to 9-cis-RA and is much less sensitive to the inhibitory effects of ketoconazole. In cooperation with Cyp26a1, contributes to the CNS patterning and the development of regions of higher visual acuity. The protein is Cytochrome P450 26C1 of Mus musculus (Mouse).